Consider the following 44-residue polypeptide: Mu-conotoxin-like Cal 12.1.3b (44 aa).

Intrachain disulfides connect cysteine 3–cysteine 16, cysteine 11–cysteine 28, cysteine 18–cysteine 33, and cysteine 27–cysteine 38. Proline 23 bears the 4-hydroxyproline mark. 2 positions are modified to 6'-bromotryptophan: tryptophan 36 and tryptophan 37. 4-hydroxyproline is present on proline 39. The residue at position 43 (tryptophan 43) is a 6'-bromotryptophan.

Expressed by the venom duct.

It localises to the secreted. Mu-conotoxins block voltage-gated sodium channels. This toxin reversibly blocks voltage-gated sodium channel in cephalopods, with no alteration in the voltage dependence of sodium conductance or on the kinetics of inactivation. The sequence is that of Mu-conotoxin-like Cal 12.1.3b from Californiconus californicus (California cone).